A 338-amino-acid chain; its full sequence is tRNA pseudouridine synthase D (338 aa).

Asp-79 (nucleophile) is an active-site residue. In terms of domain architecture, TRUD spans 154–303 (GVPNYFGEQR…EEAWRANILY (150 aa)).

This sequence belongs to the pseudouridine synthase TruD family.

The enzyme catalyses uridine(13) in tRNA = pseudouridine(13) in tRNA. Responsible for synthesis of pseudouridine from uracil-13 in transfer RNAs. The protein is tRNA pseudouridine synthase D of Legionella pneumophila (strain Lens).